Reading from the N-terminus, the 155-residue chain is Small ribosomal subunit protein uS7c (155 aa).

The protein belongs to the universal ribosomal protein uS7 family. In terms of assembly, part of the 30S ribosomal subunit.

The protein resides in the plastid. In terms of biological role, one of the primary rRNA binding proteins, it binds directly to 16S rRNA where it nucleates assembly of the head domain of the 30S subunit. This Lathraea clandestina (Purple toothwort) protein is Small ribosomal subunit protein uS7c (rps7).